Here is a 313-residue protein sequence, read N- to C-terminus: Ribosomal RNA small subunit methyltransferase H (313 aa).

Residues 31–33 (GGH), D51, F77, D95, and Q102 contribute to the S-adenosyl-L-methionine site.

It belongs to the methyltransferase superfamily. RsmH family.

It localises to the cytoplasm. The enzyme catalyses cytidine(1402) in 16S rRNA + S-adenosyl-L-methionine = N(4)-methylcytidine(1402) in 16S rRNA + S-adenosyl-L-homocysteine + H(+). Its function is as follows. Specifically methylates the N4 position of cytidine in position 1402 (C1402) of 16S rRNA. The protein is Ribosomal RNA small subunit methyltransferase H of Xylella fastidiosa (strain M23).